We begin with the raw amino-acid sequence, 154 residues long: D-aminoacyl-tRNA deacylase (154 aa).

The Gly-cisPro motif, important for rejection of L-amino acids motif lies at 142-143; the sequence is GP.

The protein belongs to the DTD family. Homodimer.

The protein localises to the cytoplasm. It carries out the reaction glycyl-tRNA(Ala) + H2O = tRNA(Ala) + glycine + H(+). The catalysed reaction is a D-aminoacyl-tRNA + H2O = a tRNA + a D-alpha-amino acid + H(+). Functionally, an aminoacyl-tRNA editing enzyme that deacylates mischarged D-aminoacyl-tRNAs. Also deacylates mischarged glycyl-tRNA(Ala), protecting cells against glycine mischarging by AlaRS. Acts via tRNA-based rather than protein-based catalysis; rejects L-amino acids rather than detecting D-amino acids in the active site. By recycling D-aminoacyl-tRNA to D-amino acids and free tRNA molecules, this enzyme counteracts the toxicity associated with the formation of D-aminoacyl-tRNA entities in vivo and helps enforce protein L-homochirality. This Polaromonas sp. (strain JS666 / ATCC BAA-500) protein is D-aminoacyl-tRNA deacylase.